The following is a 698-amino-acid chain: Polyribonucleotide nucleotidyltransferase (698 aa).

The Mg(2+) site is built by D490 and D496. A KH domain is found at 557–616; that stretch reads PKVVTMTIKPDKIRDVIGPGGKKINEIIDETGVKLDIEQDGTIFIGAVDQAMINRAREII. In terms of domain architecture, S1 motif spans 626–694; it reads GQTYQATVKR…KQGRVNASHR (69 aa).

The protein belongs to the polyribonucleotide nucleotidyltransferase family. It depends on Mg(2+) as a cofactor.

The protein resides in the cytoplasm. It carries out the reaction RNA(n+1) + phosphate = RNA(n) + a ribonucleoside 5'-diphosphate. Functionally, involved in mRNA degradation. Catalyzes the phosphorolysis of single-stranded polyribonucleotides processively in the 3'- to 5'-direction. The polypeptide is Polyribonucleotide nucleotidyltransferase (Staphylococcus aureus (strain Mu3 / ATCC 700698)).